A 377-amino-acid chain; its full sequence is Succinyl-diaminopimelate desuccinylase (377 aa).

Zn(2+) is bound at residue histidine 68. Residue aspartate 70 is part of the active site. Aspartate 101 contacts Zn(2+). Glutamate 135 (proton acceptor) is an active-site residue. Residues glutamate 136, glutamate 164, and histidine 350 each contribute to the Zn(2+) site.

This sequence belongs to the peptidase M20A family. DapE subfamily. In terms of assembly, homodimer. Zn(2+) serves as cofactor. The cofactor is Co(2+).

It carries out the reaction N-succinyl-(2S,6S)-2,6-diaminopimelate + H2O = (2S,6S)-2,6-diaminopimelate + succinate. The protein operates within amino-acid biosynthesis; L-lysine biosynthesis via DAP pathway; LL-2,6-diaminopimelate from (S)-tetrahydrodipicolinate (succinylase route): step 3/3. Its function is as follows. Catalyzes the hydrolysis of N-succinyl-L,L-diaminopimelic acid (SDAP), forming succinate and LL-2,6-diaminopimelate (DAP), an intermediate involved in the bacterial biosynthesis of lysine and meso-diaminopimelic acid, an essential component of bacterial cell walls. In Acinetobacter baumannii (strain AB0057), this protein is Succinyl-diaminopimelate desuccinylase.